Consider the following 151-residue polypeptide: FAD synthase (151 aa).

ATP is bound by residues 21–22, 26–29, and aspartate 104; these read TF and HPGH.

Belongs to the archaeal FAD synthase family. As to quaternary structure, homodimer. The cofactor is a divalent metal cation.

It carries out the reaction FMN + ATP + H(+) = FAD + diphosphate. Its pathway is cofactor biosynthesis; FAD biosynthesis; FAD from FMN: step 1/1. Catalyzes the transfer of the AMP portion of ATP to flavin mononucleotide (FMN) to produce flavin adenine dinucleotide (FAD) coenzyme. The protein is FAD synthase of Methanosarcina mazei (strain ATCC BAA-159 / DSM 3647 / Goe1 / Go1 / JCM 11833 / OCM 88) (Methanosarcina frisia).